A 1838-amino-acid polypeptide reads, in one-letter code: Lysine-specific demethylase 5 (1838 aa).

The disordered stretch occupies residues 1 to 150 (MSAKTEADNT…SSNKFDQGKN (150 aa)). The span at 15–31 (SGGGGVGSGTSSGGGAS) shows a compositional bias: gly residues. Residues 45–56 (RNSTGNGTNSGS) show a composition bias toward low complexity. Over residues 136-145 (HTQPHSSNKF) the composition is skewed to polar residues. The JmjN domain occupies 161-202 (CPVFRPTTEEFKNPLAYISKIRSIAEKCGIAKILPPATWSPP). Residues 226 to 316 (TRVKLNFLDQ…ILHPFEVYTS (91 aa)) form the ARID domain. The segment covering 321 to 333 (GPTPTSSGSGSTP) has biased composition (low complexity). Disordered stretches follow at residues 321–380 (GPTP…GLSG) and 416–437 (GSPL…KGGE). Threonine 323 is subject to Phosphothreonine. Polar residues-rich tracts occupy residues 351 to 361 (TRQQIAPPNET), 369 to 380 (FGNSNASCGLSG), and 416 to 430 (GSPL…TRGA). A PHD-type 1 zinc finger spans residues 448–498 (KYICHICNRGDVEESMLLCDGCDDSYHTFCLLPPLTSIPKGEWLCPRCVVE). The region spanning 591 to 757 (EYAESSWNLN…MGRECVNHYS (167 aa)) is the JmjC domain. The Fe cation site is built by histidine 637, aspartate 640, and histidine 725. The stretch at 960-1049 (VRTRSDHNQE…LRIELQQLDL (90 aa)) forms a coiled coil. The segment at 1293-1354 (DMFCLCKSEF…KWLCPSCVRS (62 aa)) adopts a PHD-type 2 zinc-finger fold. Residues 1401–1462 (SSPDVSAAQE…SDADDDDDED (62 aa)) are disordered. The segment covering 1407–1417 (AAQEAIMAQQQ) has biased composition (low complexity). Phosphoserine occurs at positions 1422 and 1433. Residues 1453 to 1462 (SDADDDDDED) show a composition bias toward acidic residues. Serine 1474 carries the post-translational modification Phosphoserine. A disordered region spans residues 1548-1751 (YMQRQRQQHT…QRSQQAAQED (204 aa)). Low complexity-rich tracts occupy residues 1576–1595 (NSPN…SNSG), 1624–1650 (GKKG…PGAD), 1658–1667 (ANGGNTNSST), 1674–1683 (SATTTPTPGS), and 1692–1736 (STTA…ATGG). 2 positions are modified to phosphoserine: serine 1635 and serine 1640. The PHD-type 3 zinc finger occupies 1753–1808 (EEECRAENCHKPTGREVDWVQCDGGCNEWFHMYCVGLNRSQIKPDDDYICIRCTKT). The disordered stretch occupies residues 1814 to 1838 (QGSGHSMSVASTTTPGKQRAVQSAR).

This sequence belongs to the JARID1 histone demethylase family. As to quaternary structure, interacts with Myc. Part of a complex containing Lid, Myc and Ash2. Fe(2+) serves as cofactor.

It localises to the nucleus. It catalyses the reaction N(6),N(6),N(6)-trimethyl-L-lysyl(4)-[histone H3] + 3 2-oxoglutarate + 3 O2 = L-lysyl(4)-[histone H3] + 3 formaldehyde + 3 succinate + 3 CO2. Inhibited by Myc. Functionally, histone demethylase that specifically demethylates 'Lys-4' of histone H3, thereby playing a central role in histone code. Does not demethylate histone H3 'Lys-9', H3 'Lys-27', H3 'Lys-36', H3 'Lys-79' or H4 'Lys-20'. Specifically demethylates trimethylated H3 'Lys-4'. Required for the correct regulation of homeotic genes during development. Plays a role in the regulation of the circadian rhythm and in maintaining the normal periodicity of the circadian clock. Regulates the expression of clock-controlled genes including tim, per and cry. In Drosophila melanogaster (Fruit fly), this protein is Lysine-specific demethylase 5.